The following is a 498-amino-acid chain: ATP synthase subunit beta, chloroplastic (498 aa).

172-179 (GGAGVGKT) provides a ligand contact to ATP.

This sequence belongs to the ATPase alpha/beta chains family. As to quaternary structure, F-type ATPases have 2 components, CF(1) - the catalytic core - and CF(0) - the membrane proton channel. CF(1) has five subunits: alpha(3), beta(3), gamma(1), delta(1), epsilon(1). CF(0) has four main subunits: a(1), b(1), b'(1) and c(9-12).

Its subcellular location is the plastid. It is found in the chloroplast thylakoid membrane. The enzyme catalyses ATP + H2O + 4 H(+)(in) = ADP + phosphate + 5 H(+)(out). Functionally, produces ATP from ADP in the presence of a proton gradient across the membrane. The catalytic sites are hosted primarily by the beta subunits. This is ATP synthase subunit beta, chloroplastic from Eucalyptus globulus subsp. globulus (Tasmanian blue gum).